The primary structure comprises 243 residues: Probable transcriptional regulatory protein BH0025 (243 aa).

It belongs to the TACO1 family.

It is found in the cytoplasm. This Borrelia hermsii (strain HS1 / DAH) protein is Probable transcriptional regulatory protein BH0025.